The sequence spans 505 residues: Lysine--tRNA ligase (505 aa).

Positions 415 and 422 each coordinate Mg(2+).

The protein belongs to the class-II aminoacyl-tRNA synthetase family. As to quaternary structure, homodimer. It depends on Mg(2+) as a cofactor.

The protein resides in the cytoplasm. The catalysed reaction is tRNA(Lys) + L-lysine + ATP = L-lysyl-tRNA(Lys) + AMP + diphosphate. The sequence is that of Lysine--tRNA ligase from Escherichia coli O157:H7.